We begin with the raw amino-acid sequence, 84 residues long: Large ribosomal subunit protein bL31 (84 aa).

Disordered regions lie at residues 1 to 41 (MQHD…DSTN) and 63 to 84 (RRYGLTDDDEGDDEETEDAADE). Over residues 21–30 (EITTRSTMET) the composition is skewed to polar residues. Residues 68-84 (TDDDEGDDEETEDAADE) show a composition bias toward acidic residues.

The protein belongs to the bacterial ribosomal protein bL31 family. Type A subfamily. Part of the 50S ribosomal subunit.

Its function is as follows. Binds the 23S rRNA. The polypeptide is Large ribosomal subunit protein bL31 (Salinibacter ruber (strain DSM 13855 / M31)).